The sequence spans 604 residues: Deuterosome assembly protein 1 (604 aa).

Coiled-coil stretches lie at residues 14-59, 85-197, 226-278, and 336-399; these read CEAE…NAQT, MTQN…GKKQ, IIEK…ELQS, and QDQP…KQLK. Residue Ser-547 is modified to Phosphoserine. A coiled-coil region spans residues 558 to 601; that stretch reads AAQHFLLEEEKRAKELEKLLNTHIDELQRHTEFTLNKYSKLKQN.

Belongs to the CEP63 family. In terms of assembly, interacts with CEP152; the interaction is mutually exclusive with CEP63.

It is found in the cytoplasm. Its function is as follows. Key structural component of the deuterosome, a structure that promotes de novo centriole amplification in multiciliated cells. Deuterosome-mediated centriole amplification occurs in terminally differentiated multiciliated cells and can generate more than 100 centrioles. Probably sufficient for the specification and formation of the deuterosome inner core. Interacts with CEP152 and recruits PLK4 to activate centriole biogenesis. The protein is Deuterosome assembly protein 1 of Homo sapiens (Human).